The sequence spans 1918 residues: NFX1-type zinc finger-containing protein 1 (1918 aa).

Positions 1 to 12 (MEERRPHLDARP) are enriched in basic and acidic residues. 2 disordered regions span residues 1–58 (MEER…RANN) and 75–140 (RNPH…QPQQ). The segment covering 30–42 (RARNQANNPPANA) has biased composition (low complexity). Positions 82–105 (RNQEGHASDEARDQRHDQENDTRW) are enriched in basic and acidic residues. Residues 120-129 (SNDNFQQWRT) show a composition bias toward polar residues. The stretch at 286–313 (DIEEETEKNLEKVQTIIEHLQEKRREGT) forms a coiled coil. Disordered regions lie at residues 796–819 (SVSP…GEEE) and 876–896 (TAAG…QKKK). Over residues 809–819 (EGDEEEEGEEE) the composition is skewed to acidic residues. Residues 877–887 (AAGQEQATGEW) show a composition bias toward polar residues. Positions 886–967 (EWQTQRNQKK…TSAERMAELR (82 aa)) form a coiled coil. 6 NF-X1-type zinc fingers span residues 1298-1320 (CGHV…QCMK), 1330-1346 (GHRC…PCQV), 1382-1400 (CGHR…LCSE), 1441-1463 (CGHP…RCQQ), 1471-1488 (CSHK…PCQR), and 1546-1564 (CGHP…KCRI). Residues 1741–1820 (LAKKRLSFTS…EKMEALKATL (80 aa)) adopt a coiled-coil conformation. An RZ-type zinc finger spans residues 1827–1898 (ISEEERVQIV…LASEMDGAQH (72 aa)). Zn(2+)-binding residues include Cys1849, His1853, Cys1869, and Cys1872.

Belongs to the ZNFX1 family. In terms of assembly, interacts with MAVS. As to expression, widely expressed.

Its subcellular location is the mitochondrion outer membrane. It localises to the cytoplasm. It is found in the stress granule. Functionally, RNA-binding protein that initiates the antiviral response and is required to restrict the replication of RNA viruses. Acts as a double-stranded RNA (dsRNA) sensor that recognizes viral RNA and then interacts with MAVS to initiate the type I interferon response. Also required for immunity against some bacteria, such as mycobacteria. This Homo sapiens (Human) protein is NFX1-type zinc finger-containing protein 1.